A 141-amino-acid chain; its full sequence is Hemoglobin subunit alpha (141 aa).

In terms of domain architecture, Globin spans 1–141 (VLSPGDKSNI…VSTVLTSKYR (141 aa)). At Ser-3 the chain carries Phosphoserine. 2 positions are modified to N6-succinyllysine: Lys-7 and Lys-11. N6-acetyllysine; alternate is present on Lys-16. Lys-16 bears the N6-succinyllysine; alternate mark. Phosphotyrosine is present on Tyr-24. Phosphoserine is present on Ser-35. Lys-40 is subject to N6-succinyllysine. Phosphoserine is present on Ser-49. His-58 serves as a coordination point for O2. A heme b-binding site is contributed by His-87. At Ser-102 the chain carries Phosphoserine. The residue at position 108 (Thr-108) is a Phosphothreonine. Ser-124 carries the phosphoserine modification. Thr-134 and Thr-137 each carry phosphothreonine. Ser-138 carries the post-translational modification Phosphoserine.

The protein belongs to the globin family. As to quaternary structure, heterotetramer of two alpha chains and two beta chains. In terms of tissue distribution, red blood cells.

In terms of biological role, involved in oxygen transport from the lung to the various peripheral tissues. Functionally, hemopressin acts as an antagonist peptide of the cannabinoid receptor CNR1. Hemopressin-binding efficiently blocks cannabinoid receptor CNR1 and subsequent signaling. The protein is Hemoglobin subunit alpha (HBA) of Tupaia glis (Common tree shrew).